The primary structure comprises 281 residues: MSKFLVKAPAKINLFLHILGKNSNYHSLESLLVFVNIYDILEVTIDAPRSGVYFTNLKINRYNNTITKVIYLLSQHSTSSVNVFVSVIKNILVSAGLAGGSADAAAVMRLLGNVWDIQPQVLEELALEIGSDVPACLHSKTLFARGRGEDILLLPDLCLPKYIVIVAPKGKPLSTVKVFNNYEPSAFSSPICDNLPVRQDDWLELIYNARNDLLDTALKFVPEIEEILFVLRKFRNCLIARMTGSGATCFALFNELSDAEVVVRELQMTRPDWIVFNAKIL.

Residue K11 is part of the active site. 92–102 (LVSAGLAGGSA) contributes to the ATP binding site. D132 is a catalytic residue.

Belongs to the GHMP kinase family. IspE subfamily.

The catalysed reaction is 4-CDP-2-C-methyl-D-erythritol + ATP = 4-CDP-2-C-methyl-D-erythritol 2-phosphate + ADP + H(+). Its pathway is isoprenoid biosynthesis; isopentenyl diphosphate biosynthesis via DXP pathway; isopentenyl diphosphate from 1-deoxy-D-xylulose 5-phosphate: step 3/6. Its function is as follows. Catalyzes the phosphorylation of the position 2 hydroxy group of 4-diphosphocytidyl-2C-methyl-D-erythritol. This is 4-diphosphocytidyl-2-C-methyl-D-erythritol kinase from Ehrlichia ruminantium (strain Welgevonden).